The primary structure comprises 217 residues: Endo-1,4-beta-xylanase (217 aa).

The N-terminal stretch at 1–17 is a signal peptide; sequence MQFLIPVVILCVSLVDS. The GH11 domain maps to 20–217; it reads VLYNNEIGFN…SSGFADITVS (198 aa). N-linked (GlcNAc...) asparagine glycosylation is found at Asn-56 and Asn-80. The Nucleophile role is filled by Glu-107. Glu-204 functions as the Proton donor in the catalytic mechanism.

It belongs to the glycosyl hydrolase 11 (cellulase G) family. In terms of tissue distribution, expressed in larval carcasses and gut, and adult gut.

Its subcellular location is the secreted. The catalysed reaction is Endohydrolysis of (1-&gt;4)-beta-D-xylosidic linkages in xylans.. The protein operates within glycan degradation; xylan degradation. This Phaedon cochleariae (Mustard beetle) protein is Endo-1,4-beta-xylanase.